We begin with the raw amino-acid sequence, 285 residues long: ATP phosphoribosyltransferase (285 aa).

The protein belongs to the ATP phosphoribosyltransferase family. Long subfamily. Requires Mg(2+) as cofactor.

The protein resides in the cytoplasm. It carries out the reaction 1-(5-phospho-beta-D-ribosyl)-ATP + diphosphate = 5-phospho-alpha-D-ribose 1-diphosphate + ATP. Its pathway is amino-acid biosynthesis; L-histidine biosynthesis; L-histidine from 5-phospho-alpha-D-ribose 1-diphosphate: step 1/9. Its activity is regulated as follows. Feedback inhibited by histidine. Catalyzes the condensation of ATP and 5-phosphoribose 1-diphosphate to form N'-(5'-phosphoribosyl)-ATP (PR-ATP). Has a crucial role in the pathway because the rate of histidine biosynthesis seems to be controlled primarily by regulation of HisG enzymatic activity. This chain is ATP phosphoribosyltransferase, found in Sulfurisphaera tokodaii (strain DSM 16993 / JCM 10545 / NBRC 100140 / 7) (Sulfolobus tokodaii).